Reading from the N-terminus, the 83-residue chain is Small ribosomal subunit protein uS17 (83 aa).

This sequence belongs to the universal ribosomal protein uS17 family. In terms of assembly, part of the 30S ribosomal subunit.

One of the primary rRNA binding proteins, it binds specifically to the 5'-end of 16S ribosomal RNA. The protein is Small ribosomal subunit protein uS17 of Campylobacter concisus (strain 13826).